The following is a 358-amino-acid chain: Glycerophosphodiester phosphodiesterase, periplasmic (358 aa).

Positions 1–25 are cleaved as a signal peptide; it reads MKLTLKNLSMAIMMSTIVMGSSAMA. Residues 31-355 enclose the GP-PDE domain; sequence KIVIAHRGAS…DFPDKAVKFL (325 aa). His-36 functions as the Proton acceptor in the catalytic mechanism. The Ca(2+) site is built by Glu-63 and Asp-65. The active-site Proton donor is the His-78. A Ca(2+)-binding site is contributed by Glu-171.

Belongs to the glycerophosphoryl diester phosphodiesterase family. As to quaternary structure, homodimer. The cofactor is Ca(2+).

The protein resides in the periplasm. The enzyme catalyses a sn-glycero-3-phosphodiester + H2O = an alcohol + sn-glycerol 3-phosphate + H(+). Functionally, glycerophosphodiester phosphodiesterase hydrolyzes glycerophosphodiesters into glycerol-3-phosphate (G3P) and the corresponding alcohol. The protein is Glycerophosphodiester phosphodiesterase, periplasmic (glpQ) of Escherichia coli (strain K12).